Consider the following 154-residue polypeptide: Transcriptional repressor NrdR (154 aa).

Residues 3–34 (CPFCGAHDTKVIDSRLVAEGDQVRRRRECLAC) fold into a zinc finger. The ATP-cone domain maps to 49–139 (PRLIKQDGSR…VYRRFQDLNE (91 aa)).

It belongs to the NrdR family. The cofactor is Zn(2+).

In terms of biological role, negatively regulates transcription of bacterial ribonucleotide reductase nrd genes and operons by binding to NrdR-boxes. In Pseudomonas aeruginosa (strain LESB58), this protein is Transcriptional repressor NrdR.